A 304-amino-acid chain; its full sequence is Acetyl-coenzyme A carboxylase carboxyl transferase subunit beta (304 aa).

The CoA carboxyltransferase N-terminal domain maps to 29–298; sequence LWTKCVSCAA…QAYRPSPQAS (270 aa). 4 residues coordinate Zn(2+): Cys-33, Cys-36, Cys-52, and Cys-55. The C4-type zinc finger occupies 33-55; that stretch reads CVSCAALHYTKDFQLNLCVCPAC.

The protein belongs to the AccD/PCCB family. Acetyl-CoA carboxylase is a heterohexamer composed of biotin carboxyl carrier protein (AccB), biotin carboxylase (AccC) and two subunits each of ACCase subunit alpha (AccA) and ACCase subunit beta (AccD). Zn(2+) serves as cofactor.

It localises to the cytoplasm. The enzyme catalyses N(6)-carboxybiotinyl-L-lysyl-[protein] + acetyl-CoA = N(6)-biotinyl-L-lysyl-[protein] + malonyl-CoA. The protein operates within lipid metabolism; malonyl-CoA biosynthesis; malonyl-CoA from acetyl-CoA: step 1/1. Functionally, component of the acetyl coenzyme A carboxylase (ACC) complex. Biotin carboxylase (BC) catalyzes the carboxylation of biotin on its carrier protein (BCCP) and then the CO(2) group is transferred by the transcarboxylase to acetyl-CoA to form malonyl-CoA. The sequence is that of Acetyl-coenzyme A carboxylase carboxyl transferase subunit beta from Gloeobacter violaceus (strain ATCC 29082 / PCC 7421).